A 100-amino-acid polypeptide reads, in one-letter code: Large ribosomal subunit protein bL21 (100 aa).

It belongs to the bacterial ribosomal protein bL21 family. In terms of assembly, part of the 50S ribosomal subunit. Contacts protein L20.

In terms of biological role, this protein binds to 23S rRNA in the presence of protein L20. The protein is Large ribosomal subunit protein bL21 of Mycoplasmopsis synoviae (strain 53) (Mycoplasma synoviae).